The chain runs to 577 residues: Adenine deaminase (577 aa).

The protein belongs to the metallo-dependent hydrolases superfamily. Adenine deaminase family. Mn(2+) serves as cofactor.

It catalyses the reaction adenine + H2O + H(+) = hypoxanthine + NH4(+). This is Adenine deaminase from Kosmotoga olearia (strain ATCC BAA-1733 / DSM 21960 / TBF 19.5.1).